We begin with the raw amino-acid sequence, 199 residues long: UPF0462 protein C4orf33 homolog (199 aa).

The protein belongs to the UPF0462 family.

This Rattus norvegicus (Rat) protein is UPF0462 protein C4orf33 homolog.